The following is a 299-amino-acid chain: Heterodisulfide reductase subunit B-like protein (299 aa).

Belongs to the HdrB family. As to quaternary structure, the heterodisulfide reductase is composed of three subunits; HdlA, HdlB and HdlC. It forms a complex with the F420-non-reducing hydrogenase (Mvh), which provides the reducing equivalents to the heterodisulfide reductase.

The protein resides in the cytoplasm. In terms of biological role, has oxidoreductase activity. The Hdl and Mvh subunits may together mediate electron transfer from hydrogen to an unidentified electron acceptor on the cytoplasmic side of the membrane. This chain is Heterodisulfide reductase subunit B-like protein (hdlB), found in Archaeoglobus profundus (strain DSM 5631 / JCM 9629 / NBRC 100127 / Av18).